The primary structure comprises 505 residues: Putative diacyglycerol O-acyltransferase MT0919 (505 aa).

His167 acts as the Proton acceptor in catalysis.

It belongs to the long-chain O-acyltransferase family.

The catalysed reaction is an acyl-CoA + a 1,2-diacyl-sn-glycerol = a triacyl-sn-glycerol + CoA. It participates in glycerolipid metabolism; triacylglycerol biosynthesis. In Mycobacterium tuberculosis (strain CDC 1551 / Oshkosh), this protein is Putative diacyglycerol O-acyltransferase MT0919.